The sequence spans 357 residues: Protein RecA (357 aa).

An ATP-binding site is contributed by 71-78 (GPESSGKT).

This sequence belongs to the RecA family.

The protein resides in the cytoplasm. Functionally, can catalyze the hydrolysis of ATP in the presence of single-stranded DNA, the ATP-dependent uptake of single-stranded DNA by duplex DNA, and the ATP-dependent hybridization of homologous single-stranded DNAs. It interacts with LexA causing its activation and leading to its autocatalytic cleavage. This is Protein RecA from Ehrlichia canis (strain Jake).